Here is a 656-residue protein sequence, read N- to C-terminus: Methylenetetrahydrofolate reductase (NADPH) (656 aa).

A disordered region spans residues 1-46; the sequence is MVNEARGNDSLNPCLEGSASSSSESSKDSSRCSTPGLDPERHERLR. A phosphoserine mark is found at Ser10, Ser18, Ser20, Ser21, Ser23, Ser25, Ser26, Ser29, and Ser30. Thr34 is modified (phosphothreonine). Residue Glu63 is the Proton donor/acceptor of the active site. NAD(+) is bound by residues 63–68 and 94–95; these read EFFPPR and TW. A Phosphothreonine modification is found at Thr94. 94–95 contacts FAD; it reads TW. At Ser103 the chain carries Phosphoserine. FAD is bound by residues His127, 157 to 159, 174 to 175, Tyr197, 201 to 204, Asp210, and Lys217; these read RGD, YA, and HPEA. Asp159 serves as a coordination point for substrate. Substrate contacts are provided by Gln228, Tyr321, and Arg325. A Phosphoserine modification is found at Ser394. Thr451 is modified (phosphothreonine). S-adenosyl-L-methionine-binding positions include Asn456, 461 to 464, 481 to 485, Thr560, and Thr573; these read AAET and TINSQ.

This sequence belongs to the methylenetetrahydrofolate reductase family. As to quaternary structure, homodimer. FAD is required as a cofactor. Phosphorylation of an N-terminal serine-rich phosphorylation region increases sensitivity to S-adenosylmethionine and inhibition.

The catalysed reaction is (6S)-5-methyl-5,6,7,8-tetrahydrofolate + NADP(+) = (6R)-5,10-methylene-5,6,7,8-tetrahydrofolate + NADPH + H(+). It participates in one-carbon metabolism; tetrahydrofolate interconversion. With respect to regulation, allosterically regulated by S-adenosylmethionine (SAM). In terms of biological role, catalyzes the conversion of 5,10-methylenetetrahydrofolate to 5-methyltetrahydrofolate, a cosubstrate for homocysteine remethylation to methionine. Represents a key regulatory connection between the folate and methionine cycles. The sequence is that of Methylenetetrahydrofolate reductase (NADPH) (MTHFR) from Macaca fascicularis (Crab-eating macaque).